A 774-amino-acid polypeptide reads, in one-letter code: 5-methyltetrahydropteroyltriglutamate--homocysteine methyltransferase (774 aa).

Residues 23 to 26 (RELK) and K123 each bind 5-methyltetrahydropteroyltri-L-glutamate. L-homocysteine-binding positions include 446–448 (IGS) and E499. L-methionine contacts are provided by residues 446 to 448 (IGS) and E499. 5-methyltetrahydropteroyltri-L-glutamate is bound by residues 530-531 (RC) and W576. An L-homocysteine-binding site is contributed by D614. D614 contacts L-methionine. E620 contributes to the 5-methyltetrahydropteroyltri-L-glutamate binding site. Zn(2+) is bound by residues H656, C658, and E680. H709 functions as the Proton donor in the catalytic mechanism. Residue C741 coordinates Zn(2+).

It belongs to the vitamin-B12 independent methionine synthase family. The cofactor is Zn(2+).

It catalyses the reaction 5-methyltetrahydropteroyltri-L-glutamate + L-homocysteine = tetrahydropteroyltri-L-glutamate + L-methionine. It functions in the pathway amino-acid biosynthesis; L-methionine biosynthesis via de novo pathway; L-methionine from L-homocysteine (MetE route): step 1/1. In terms of biological role, catalyzes the transfer of a methyl group from 5-methyltetrahydrofolate to homocysteine resulting in methionine formation. This chain is 5-methyltetrahydropteroyltriglutamate--homocysteine methyltransferase, found in Aliivibrio fischeri (strain ATCC 700601 / ES114) (Vibrio fischeri).